Here is a 285-residue protein sequence, read N- to C-terminus: MNMFLLLMSLYLLGSARGTSGQSDESSGSIDHQTSVQQLSGEFFSLENPSDAEALYETASGLNTLSEHGSSEHGSREHTVAEHTPGEHAESEHASGEPAATGHAEGEHTVGEQPSGEQPSGEHLSGEQSLGEHASGEQPSDEQLSGEHASGEQPSGEHASGEQPSGEQPSGEHASGEQSLGEHALSEKPSGEQPSGAPISSISTGTILNCYTCAYMNDQGRCLRGEGTCITQNSQQCMLKKIFEGGKLQFMVQGCENMCPSMNLFSHGTRMQIICCRNQSFCNKI.

Residues 1–21 (MNMFLLLMSLYLLGSARGTSG) form the signal peptide. Positions 64-200 (TLSEHGSSEH…GEQPSGAPIS (137 aa)) are disordered. 19 consecutive repeat copies span residues 66-70 (SEHGS), 71-75 (SEHGS), 85-89 (PGEHA), 91-95 (SEHAS), 110-114 (VGEQP), 115-119 (SGEQP), 120-124 (SGEHL), 125-129 (SGEQS), 130-134 (LGEHA), 135-139 (SGEQP), 145-149 (SGEHA), 150-154 (SGEQP), 155-159 (SGEHA), 160-164 (SGEQP), 165-169 (SGEQP), 170-174 (SGEHA), 175-179 (SGEQS), 180-184 (LGEHA), and 190-194 (SGEQP). The tract at residues 66–95 (SEHGSSEHGSREHTVAEHTPGEHAESEHAS) is 3 X 5 AA repeats of S-E-H-[GA]-A. Positions 69–95 (GSSEHGSREHTVAEHTPGEHAESEHAS) are enriched in basic and acidic residues. Positions 85–184 (PGEHAESEHA…SGEQSLGEHA (100 aa)) are 7 X 5 AA repeats of S-G-E-H-[AL]. Residues 110–194 (VGEQPSGEQP…LSEKPSGEQP (85 aa)) form a 9 X 5 AA repeats of [SV]-G-E-Q-[PSA] region. The N-linked (GlcNAc...) asparagine glycan is linked to N278.

In terms of tissue distribution, testis.

The protein resides in the cytoplasmic vesicle. Its subcellular location is the secretory vesicle. It localises to the acrosome. This is Acrosomal protein SP-10 (ACRV1) from Papio hamadryas (Hamadryas baboon).